A 183-amino-acid polypeptide reads, in one-letter code: Alkyl hydroperoxide reductase AhpD (183 aa).

The Proton donor role is filled by Cys-132. Cys-132 and Cys-135 are oxidised to a cystine. Cys-135 functions as the Cysteine sulfenic acid (-SOH) intermediate in the catalytic mechanism.

This sequence belongs to the AhpD family.

The enzyme catalyses N(6)-[(R)-dihydrolipoyl]-L-lysyl-[lipoyl-carrier protein] + a hydroperoxide = N(6)-[(R)-lipoyl]-L-lysyl-[lipoyl-carrier protein] + an alcohol + H2O. Antioxidant protein with alkyl hydroperoxidase activity. Required for the reduction of the AhpC active site cysteine residues and for the regeneration of the AhpC enzyme activity. This chain is Alkyl hydroperoxide reductase AhpD, found in Caulobacter vibrioides (strain ATCC 19089 / CIP 103742 / CB 15) (Caulobacter crescentus).